Reading from the N-terminus, the 444-residue chain is Bifunctional enolase 2/transcriptional activator (444 aa).

Substrate contacts are provided by His163 and Glu172. The active-site Proton donor is the Glu215. Asp250, Glu300, and Asp327 together coordinate Mg(2+). 2 residues coordinate substrate: Glu300 and Asp327. Lys352 (proton acceptor) is an active-site residue. Substrate is bound by residues Ser379–Ser382 and Lys403.

The protein belongs to the enolase family. As to quaternary structure, homodimer. It depends on Mg(2+) as a cofactor.

It localises to the cytoplasm. The protein localises to the cytosol. Its subcellular location is the nucleus. It is found in the mitochondrion outer membrane. It carries out the reaction (2R)-2-phosphoglycerate = phosphoenolpyruvate + H2O. It participates in carbohydrate degradation; glycolysis; pyruvate from D-glyceraldehyde 3-phosphate: step 4/5. In terms of biological role, multifunctional enzyme that acts as an enolase involved in the metabolism and as a positive regulator of cold-responsive gene transcription. Binds to the cis-element the gene promoter of STZ/ZAT10, a zinc finger transcriptional repressor. The chain is Bifunctional enolase 2/transcriptional activator (ENO2) from Arabidopsis thaliana (Mouse-ear cress).